Here is a 142-residue protein sequence, read N- to C-terminus: Small ribosomal subunit protein uS12 (142 aa).

This sequence belongs to the universal ribosomal protein uS12 family. Part of the 30S ribosomal subunit.

Its function is as follows. With S4 and S5 plays an important role in translational accuracy. Located at the interface of the 30S and 50S subunits. The sequence is that of Small ribosomal subunit protein uS12 from Methanococcoides burtonii (strain DSM 6242 / NBRC 107633 / OCM 468 / ACE-M).